A 320-amino-acid chain; its full sequence is Malate dehydrogenase (320 aa).

NAD(+) is bound by residues 10-15 (GSGMIG) and Asp34. Substrate-binding residues include Arg83 and Arg89. Residues Asn96 and 119 to 121 (ITN) contribute to the NAD(+) site. Substrate contacts are provided by Asn121 and Arg152. Residue His176 is the Proton acceptor of the active site.

The protein belongs to the LDH/MDH superfamily. MDH type 3 family.

The enzyme catalyses (S)-malate + NAD(+) = oxaloacetate + NADH + H(+). Functionally, catalyzes the reversible oxidation of malate to oxaloacetate. The protein is Malate dehydrogenase of Rhizobium meliloti (strain 1021) (Ensifer meliloti).